The following is a 78-amino-acid chain: Acyl carrier protein BQ2027_MB0103 (78 aa).

One can recognise a Carrier domain in the interval 1 to 78 (MRDRILAAVC…ELEAVCTEFG (78 aa)). Residue Ser35 is modified to O-(pantetheine 4'-phosphoryl)serine.

The protein belongs to the acyl carrier protein (ACP) family. Pantetheine 4'-phosphate serves as cofactor.

The protein operates within lipid metabolism; fatty acid metabolism. Functionally, acyl-carrier protein (ACP) involved in the biosynthesis of a unique class of isonitrile lipopeptides (INLPs) that seem to play a role in metal acquisition. Is the dedicated ACP for the loading of activated acyl groups catalyzed by FadD10. This chain is Acyl carrier protein BQ2027_MB0103, found in Mycobacterium bovis (strain ATCC BAA-935 / AF2122/97).